The following is a 165-amino-acid chain: Cyclic pyranopterin monophosphate synthase (165 aa).

Residues 83–85 (FCH) and 120–121 (ME) contribute to the substrate site. Residue Asp-135 is part of the active site.

The protein belongs to the MoaC family. In terms of assembly, homohexamer; trimer of dimers.

The enzyme catalyses (8S)-3',8-cyclo-7,8-dihydroguanosine 5'-triphosphate = cyclic pyranopterin phosphate + diphosphate. It participates in cofactor biosynthesis; molybdopterin biosynthesis. Functionally, catalyzes the conversion of (8S)-3',8-cyclo-7,8-dihydroguanosine 5'-triphosphate to cyclic pyranopterin monophosphate (cPMP). This chain is Cyclic pyranopterin monophosphate synthase, found in Xanthomonas oryzae pv. oryzae (strain MAFF 311018).